A 398-amino-acid polypeptide reads, in one-letter code: Argininosuccinate synthase (398 aa).

ATP is bound by residues 9–17 and alanine 36; that span reads AYSGGLDTS. 2 residues coordinate L-citrulline: tyrosine 87 and serine 92. An ATP-binding site is contributed by glycine 117. L-aspartate-binding residues include threonine 119, asparagine 123, and aspartate 124. Asparagine 123 provides a ligand contact to L-citrulline. Residues arginine 127, serine 176, serine 185, glutamate 261, and tyrosine 273 each coordinate L-citrulline.

It belongs to the argininosuccinate synthase family. Type 1 subfamily. In terms of assembly, homotetramer.

It is found in the cytoplasm. It catalyses the reaction L-citrulline + L-aspartate + ATP = 2-(N(omega)-L-arginino)succinate + AMP + diphosphate + H(+). Its pathway is amino-acid biosynthesis; L-arginine biosynthesis; L-arginine from L-ornithine and carbamoyl phosphate: step 2/3. This Desulfotalea psychrophila (strain LSv54 / DSM 12343) protein is Argininosuccinate synthase.